The chain runs to 335 residues: tRNA pseudouridine synthase D (335 aa).

D77 acts as the Nucleophile in catalysis. The TRUD domain occupies 152-308 (GFPNYFTEQR…AQHLSWSFIP (157 aa)).

The protein belongs to the pseudouridine synthase TruD family.

It carries out the reaction uridine(13) in tRNA = pseudouridine(13) in tRNA. In terms of biological role, responsible for synthesis of pseudouridine from uracil-13 in transfer RNAs. The protein is tRNA pseudouridine synthase D of Histophilus somni (strain 129Pt) (Haemophilus somnus).